The primary structure comprises 2004 residues: Histone acetyltransferase KAT6A (2004 aa).

The 77-residue stretch at 1-77 (MVKLANPLYT…LNSYKDPDNP (77 aa)) folds into the SAMD1-like winged helix (WH) domain. The tract at residues 1-144 (MVKLANPLYT…FGGSAASGFH (144 aa)) is required for activation of RUNX1-1. The required for nuclear localization stretch occupies residues 52 to 166 (ELSVKDGTIL…HGRLLKDGPL (115 aa)). Residues 95-171 (QNVDWNKLIK…KDGPLYRLNT (77 aa)) enclose the H15 domain. An interaction with PML region spans residues 144–664 (HQQLRLAIKR…RKGYGRFLID (521 aa)). At K172 the chain carries N6-acetyllysine. 2 consecutive PHD-type zinc fingers follow at residues 206–265 (IPIC…CKTC) and 259–313 (CIEC…CRPR). The tract at residues 312-664 (PRKKGRKLLQ…RKGYGRFLID (353 aa)) is interaction with RUNX1-1. Residues 334–375 (PIGRPKNRLKKQNTVSKGPFSKVRTGPGRGRKRKITLSSQSA) are disordered. Residues K350 and K355 each carry the N6-acetyllysine modification. T369 carries the post-translational modification Phosphothreonine; by PKB/AKT1. At S420 the chain carries Phosphoserine. The disordered stretch occupies residues 441 to 464 (KRGNRKSSTSDWPTDNQDGWDGKQ). Polar residues predominate over residues 446 to 457 (KSSTSDWPTDNQ). Phosphoserine is present on S473. Positions 488–778 (IQEQALQKVG…VDPECLRWTP (291 aa)) are catalytic. One can recognise an MYST-type HAT domain in the interval 504-778 (PQVRCPSVIE…VDPECLRWTP (275 aa)). Positions 507-810 (RCPSVIEFGK…EPQCQERELE (304 aa)) are mediates interaction with BRPF1, required for histone H3 acetyltransferase activity. Residues 537–562 (LYLCEFCLKYMKSRTILQQHMKKCGW) form a C2HC MYST-type zinc finger. K604 carries the post-translational modification N6-acetyllysine; by autocatalysis. Residues 645 to 649 (SCIMI) and 654 to 660 (QRKGYGR) each bind acetyl-CoA. E680 (proton donor/acceptor) is an active-site residue. S684 contacts acetyl-CoA. Disordered regions lie at residues 785–1445 (VVSE…AYQD), 1461–1621 (QADE…MMQQ), and 1637–1721 (SCVV…MEIP). 2 positions are modified to phosphoserine: S787 and S812. Residues 787-803 (SEEEEEEAEEGENEEPQ) show a composition bias toward acidic residues. K815 is subject to N6-acetyllysine. Residues 817 to 836 (VSHENKEQDSYSVESEKKPE) show a composition bias toward basic and acidic residues. K834 participates in a covalent cross-link: Glycyl lysine isopeptide (Lys-Gly) (interchain with G-Cter in SUMO2). Positions 864–873 (RRGRWGRKNR) are enriched in basic residues. Positions 874 to 888 (KTQERFGDKDSKLLL) are enriched in basic and acidic residues. Residue Y899 is modified to Phosphotyrosine. Basic and acidic residues-rich tracts occupy residues 931 to 942 (GKPDLPKRRLSE) and 953 to 980 (KSPE…DRAV). A phosphoserine mark is found at S941, S954, and S974. N6-acetyllysine is present on K1007. Basic residues predominate over residues 1009 to 1030 (TLKRKKPFLHRRRRVRKRKHHN). The segment covering 1031–1042 (SSVVTETISETT) has biased composition (low complexity). 2 stretches are compositionally biased toward acidic residues: residues 1043–1053 (EVLDEPFEDSD) and 1065–1078 (FEID…DENE). Phosphoserine is present on residues S1089, S1090, and S1113. Acidic residues predominate over residues 1107 to 1118 (EEEDEESDDADD). Over residues 1146 to 1172 (LKKKKGWPKGKSRKPIHWKKRPGRKPG) the composition is skewed to basic residues. The span at 1203 to 1223 (KIQESEETVEPKEDMPLPEER) shows a compositional bias: basic and acidic residues. Over residues 1224–1245 (KEEEEMQAEAEEAEEGEEEDAA) the composition is skewed to acidic residues. Residues 1246–1262 (SSEVPAASPADSSNSPE) show a composition bias toward low complexity. The span at 1275 to 1287 (EKPRVSEEQRQSE) shows a compositional bias: basic and acidic residues. Residues 1288–1305 (EEQQELEEPEPEEEEDAA) show a composition bias toward acidic residues. Composition is skewed to basic and acidic residues over residues 1323–1345 (HLES…KEEP), 1358–1367 (KSREKIKDKE), and 1398–1420 (EDSH…HSEL). Residue K1342 forms a Glycyl lysine isopeptide (Lys-Gly) (interchain with G-Cter in SUMO2) linkage. The span at 1481-1503 (SPISSVQSHPSQSVRSVSSPNVP) shows a compositional bias: low complexity. Over residues 1508-1529 (GYTQISPEQGSLSAPSMQNMET) the composition is skewed to polar residues. Residues 1517-1642 (GSLSAPSMQN…KSPQSCVVER (126 aa)) are interaction with RUNX1-2. The tract at residues 1517 to 1741 (GSLSAPSMQN…YERIPGDFGA (225 aa)) is interaction with PML. The segment covering 1534-1548 (DVPSVSDHSQQVVDS) has biased composition (low complexity). Positions 1556 to 1573 (IESTTENYENPSSYDSTM) are enriched in polar residues. The span at 1574 to 1621 (GGSICGNSSSQSSCSYGGLSSSSSLTQSSCVVTQQMASMGSSCSMMQQ) shows a compositional bias: low complexity. Positions 1650–1699 (QPPPPPPQQPQPPPPQPQPAPQPPPPQQQPQQQPQPQPQQPPPPPPPQQQ) are enriched in pro residues. A compositionally biased stretch (polar residues) spans 1702–1712 (LSQCSMNNSFT). The tract at residues 1913 to 1948 (SMNMNTLNAMNSYRMTQPMMNSSYHSNPAYMNQTAQ) is required for activation of RUNX1-2.

This sequence belongs to the MYST (SAS/MOZ) family. In terms of assembly, component of the MOZ/MORF complex composed at least of ING5, KAT6A, KAT6B, MEAF6 and one of BRPF1, BRD1/BRPF2 and BRPF3. Interacts with RUNX1; phosphorylation of RUNX1 enhances the interaction. Interacts with RUNX2. Interacts with p53/TP53. Interacts with PML (isoform PML-4) and this interaction positively regulates its acetylation activity towards p53/TP53. Post-translationally, autoacetylation at Lys-604 is required for proper function. Autoacetylated. Phosphorylation at Thr-369 by PKB/AKT1 inhibits its interaction with PML and negatively regulates its acetylation activity towards p53/TP53.

It is found in the nucleus. The protein resides in the nucleolus. It localises to the nucleoplasm. The protein localises to the PML body. The enzyme catalyses L-lysyl-[protein] + acetyl-CoA = N(6)-acetyl-L-lysyl-[protein] + CoA + H(+). Histone acetyltransferase that acetylates lysine residues in histone H3 and histone H4 (in vitro). Component of the MOZ/MORF complex which has a histone H3 acetyltransferase activity. May act as a transcriptional coactivator for RUNX1 and RUNX2. Acetylates p53/TP53 at 'Lys-120' and 'Lys-382' and controls its transcriptional activity via association with PML. In Homo sapiens (Human), this protein is Histone acetyltransferase KAT6A (KAT6A).